The following is a 243-amino-acid chain: 3-deoxy-manno-octulosonate cytidylyltransferase (243 aa).

It belongs to the KdsB family.

The protein resides in the cytoplasm. The catalysed reaction is 3-deoxy-alpha-D-manno-oct-2-ulosonate + CTP = CMP-3-deoxy-beta-D-manno-octulosonate + diphosphate. The protein operates within nucleotide-sugar biosynthesis; CMP-3-deoxy-D-manno-octulosonate biosynthesis; CMP-3-deoxy-D-manno-octulosonate from 3-deoxy-D-manno-octulosonate and CTP: step 1/1. Its pathway is bacterial outer membrane biogenesis; lipopolysaccharide biosynthesis. Activates KDO (a required 8-carbon sugar) for incorporation into bacterial lipopolysaccharide in Gram-negative bacteria. This Helicobacter pylori (strain HPAG1) protein is 3-deoxy-manno-octulosonate cytidylyltransferase.